Here is a 239-residue protein sequence, read N- to C-terminus: MTEPDLSPAFVLHTRPYRETSQLVDLFVASMGKVSVVAKGSRSPRSSVKGLLQPFLPLHIHYGGKSSLKTLLQLEARSPQVALQGERLFSALYLNELLYYLLEPDTEYPGLFSGYFQTLLALADQQQLVSPLLRQFELLLLQQLGYGADFCYAADSCLPIDPACYYRYEPEAGFITTALRDHAFFSGREIIGIAEQAFSDEYILAAARRFSRQAFAALLGNRPLKSRELYSAFIARRSE.

It belongs to the RecO family.

Involved in DNA repair and RecF pathway recombination. The polypeptide is DNA repair protein RecO (Tolumonas auensis (strain DSM 9187 / NBRC 110442 / TA 4)).